Here is a 96-residue protein sequence, read N- to C-terminus: ATP-dependent Clp protease adapter protein ClpS (96 aa).

The protein belongs to the ClpS family. In terms of assembly, binds to the N-terminal domain of the chaperone ClpA.

Its function is as follows. Involved in the modulation of the specificity of the ClpAP-mediated ATP-dependent protein degradation. This Campylobacter jejuni subsp. jejuni serotype O:2 (strain ATCC 700819 / NCTC 11168) protein is ATP-dependent Clp protease adapter protein ClpS.